A 413-amino-acid polypeptide reads, in one-letter code: uncharacterized protein (413 aa).

Residues 3-155 form the N-acetyltransferase domain; the sequence is MEPRVLRREE…SRVRLSVPAG (153 aa). Acetyl-CoA-binding positions include 86–88, 94–99, and 122–123; these read VSV, RRGVLT, and SE. Tyr127 functions as the Proton donor in the catalytic mechanism. Phe413 serves as the catalytic Proton acceptor; via carboxylate.

The protein belongs to the acetyltransferase Eis family. In terms of assembly, homohexamer; trimer of dimers.

This is an uncharacterized protein from Streptomyces coelicolor (strain ATCC BAA-471 / A3(2) / M145).